The chain runs to 172 residues: ATP synthase subunit b (172 aa).

The helical transmembrane segment at 12-32 (SLYIGDLVFYIVTFIILMLLV) threads the bilayer. Basic and acidic residues-rich tracts occupy residues 63-74 (ESAEKMAAKRQA) and 116-131 (AQKDAEQARRDALNSA). Residues 63 to 131 (ESAEKMAAKR…QARRDALNSA (69 aa)) are disordered.

Belongs to the ATPase B chain family. In terms of assembly, F-type ATPases have 2 components, F(1) - the catalytic core - and F(0) - the membrane proton channel. F(1) has five subunits: alpha(3), beta(3), gamma(1), delta(1), epsilon(1). F(0) has three main subunits: a(1), b(2) and c(10-14). The alpha and beta chains form an alternating ring which encloses part of the gamma chain. F(1) is attached to F(0) by a central stalk formed by the gamma and epsilon chains, while a peripheral stalk is formed by the delta and b chains.

The protein resides in the cell membrane. In terms of biological role, f(1)F(0) ATP synthase produces ATP from ADP in the presence of a proton or sodium gradient. F-type ATPases consist of two structural domains, F(1) containing the extramembraneous catalytic core and F(0) containing the membrane proton channel, linked together by a central stalk and a peripheral stalk. During catalysis, ATP synthesis in the catalytic domain of F(1) is coupled via a rotary mechanism of the central stalk subunits to proton translocation. Component of the F(0) channel, it forms part of the peripheral stalk, linking F(1) to F(0). This is ATP synthase subunit b from Limosilactobacillus reuteri (strain DSM 20016) (Lactobacillus reuteri).